Here is a 156-residue protein sequence, read N- to C-terminus: Transcriptional regulator MraZ (156 aa).

2 SpoVT-AbrB domains span residues 7–64 and 93–136; these read KERH…EPSV and LEMV…EPAR.

Belongs to the MraZ family. In terms of assembly, forms oligomers.

The protein resides in the cytoplasm. It localises to the nucleoid. This Chlorobium phaeovibrioides (strain DSM 265 / 1930) (Prosthecochloris vibrioformis (strain DSM 265)) protein is Transcriptional regulator MraZ.